The chain runs to 234 residues: Leucyl/phenylalanyl-tRNA--protein transferase (234 aa).

The protein belongs to the L/F-transferase family.

Its subcellular location is the cytoplasm. It catalyses the reaction N-terminal L-lysyl-[protein] + L-leucyl-tRNA(Leu) = N-terminal L-leucyl-L-lysyl-[protein] + tRNA(Leu) + H(+). It carries out the reaction N-terminal L-arginyl-[protein] + L-leucyl-tRNA(Leu) = N-terminal L-leucyl-L-arginyl-[protein] + tRNA(Leu) + H(+). The catalysed reaction is L-phenylalanyl-tRNA(Phe) + an N-terminal L-alpha-aminoacyl-[protein] = an N-terminal L-phenylalanyl-L-alpha-aminoacyl-[protein] + tRNA(Phe). Its function is as follows. Functions in the N-end rule pathway of protein degradation where it conjugates Leu, Phe and, less efficiently, Met from aminoacyl-tRNAs to the N-termini of proteins containing an N-terminal arginine or lysine. The protein is Leucyl/phenylalanyl-tRNA--protein transferase of Nitrosomonas eutropha (strain DSM 101675 / C91 / Nm57).